The primary structure comprises 626 residues: Leucine aminopeptidase 2-1 (626 aa).

Substrate-binding positions include 134–136 (QCQ) and 259–264 (PYGGME). Residue His-288 coordinates Zn(2+). The active-site Proton acceptor is the Glu-289. Zn(2+) is bound by residues His-292 and Glu-311. The Proton donor role is filled by Tyr-389.

Belongs to the peptidase M1 family. It depends on Zn(2+) as a cofactor.

The protein localises to the cytoplasm. The protein resides in the nucleus. The enzyme catalyses an epoxide + H2O = an ethanediol. Functionally, aminopeptidase that preferentially cleaves di- and tripeptides. Also has low epoxide hydrolase activity (in vitro). Can hydrolyze the epoxide leukotriene LTA(4) but it forms preferentially 5,6-dihydroxy-7,9,11,14-eicosatetraenoic acid rather than the cytokine leukotriene B(4) as the product compared to the homologous mammalian enzyme (in vitro). The sequence is that of Leucine aminopeptidase 2-1 (LKA4) from Scheffersomyces stipitis (strain ATCC 58785 / CBS 6054 / NBRC 10063 / NRRL Y-11545) (Yeast).